A 270-amino-acid chain; its full sequence is MTVLRRKLAEAKAEGRAALVGYYPAGFPDVASSIRVVQAMVAGGCDVIEVGFPYSDPTMDGPVIQQAADRALAAGTTPKDVLAVVRAVADAGAAALVMSYWNPIEKYGVDAFAADLAAAGGSGLITPDLIPEEAEPWIKASDAAGIDRIFLVAPSSTDERLAKTCAASRGFVYAASLMGVTGTRDKVAATARRLVERTRAVTRDSGLPICVGLGISNGAQAAEVASYADGVIVGTGFCQRVLDAPDVDTACQQVRDFAAELAAGVRAAAR.

Active-site proton acceptor residues include glutamate 49 and aspartate 60.

It belongs to the TrpA family. As to quaternary structure, tetramer of two alpha and two beta chains.

It carries out the reaction (1S,2R)-1-C-(indol-3-yl)glycerol 3-phosphate + L-serine = D-glyceraldehyde 3-phosphate + L-tryptophan + H2O. It functions in the pathway amino-acid biosynthesis; L-tryptophan biosynthesis; L-tryptophan from chorismate: step 5/5. The alpha subunit is responsible for the aldol cleavage of indoleglycerol phosphate to indole and glyceraldehyde 3-phosphate. This is Tryptophan synthase alpha chain from Thermobifida fusca (strain YX).